A 64-amino-acid chain; its full sequence is Large ribosomal subunit protein uL29 (64 aa).

It belongs to the universal ribosomal protein uL29 family.

This Synechococcus elongatus (strain ATCC 33912 / PCC 7942 / FACHB-805) (Anacystis nidulans R2) protein is Large ribosomal subunit protein uL29.